The following is a 150-amino-acid chain: Lipoprotein signal peptidase (150 aa).

3 consecutive transmembrane segments (helical) span residues 8 to 28 (FYALVGFLVFLDQVTKYLAHA), 58 to 78 (GFSWLFFLLGIIALIFIGWFL), and 81 to 101 (TTGSIVFLALLQGGIAGNVFD). Residues aspartate 116 and aspartate 132 contribute to the active site. Residues 126–146 (VVFNIADLFILAGVFGTFLFL) traverse the membrane as a helical segment.

It belongs to the peptidase A8 family.

The protein resides in the cell membrane. The enzyme catalyses Release of signal peptides from bacterial membrane prolipoproteins. Hydrolyzes -Xaa-Yaa-Zaa-|-(S,diacylglyceryl)Cys-, in which Xaa is hydrophobic (preferably Leu), and Yaa (Ala or Ser) and Zaa (Gly or Ala) have small, neutral side chains.. Its pathway is protein modification; lipoprotein biosynthesis (signal peptide cleavage). This protein specifically catalyzes the removal of signal peptides from prolipoproteins. In Tropheryma whipplei (strain Twist) (Whipple's bacillus), this protein is Lipoprotein signal peptidase.